Reading from the N-terminus, the 273-residue chain is Protein FAM210A (273 aa).

The disordered stretch occupies residues 94 to 116; that stretch reads RVLSSSSTSQETPSEKKEETDPL. The span at 106-116 shows a compositional bias: basic and acidic residues; that stretch reads PSEKKEETDPL. The 113-residue stretch at 118 to 230 folds into the DUF1279 domain; the sequence is DKSISLYQRF…GYMSTPPPVK (113 aa). The chain crosses the membrane as a helical span at residues 138–158; it reads LIPVHLITSGIWFGTFYYATI. Residues 233 to 269 adopt a coiled-coil conformation; the sequence is LQGRMEETKELITEKMEETKDRLTEKLQETKGKVSFK.

Belongs to the FAM210 family. In terms of assembly, interacts with ATAD3A. In terms of tissue distribution, expressed in skeletal muscle, heart, brain but not in bone.

It is found in the membrane. The protein localises to the mitochondrion. The protein resides in the cytoplasm. Its function is as follows. May play a role in the structure and strength of both muscle and bone. The sequence is that of Protein FAM210A (Fam210a) from Mus musculus (Mouse).